The primary structure comprises 1959 residues: Myosin-9 (1959 aa).

Residues 27–77 form the Myosin N-terminal SH3-like domain; that stretch reads AAKKLVWVPSEKSGFEAASLKEEVGDEAIVELAENGKKVKVNKDDIQKMNP. In terms of domain architecture, Myosin motor spans 81 to 776; the sequence is SKVEDMAELT…VLAHLEEERD (696 aa). Residue 174-181 participates in ATP binding; it reads GESGAGKT. The segment at 654-676 is actin-binding; that stretch reads LAKLMATLRNTNPNFVRCIIPNH. The IQ domain occupies 779–808; the sequence is ITDVIIGFQACCRGYLARKAFAKRQQQLTA. Residues 837–1925 are a coiled coil; the sequence is LLQVSRQEEE…LKSKLRRGDL (1089 aa). 4 disordered regions span residues 1118–1168, 1694–1717, 1879–1917, and 1936–1959; these read EDLE…REQE, RAKR…SGKG, LEEA…SSLK, and KGTG…KATE. 2 stretches are compositionally biased toward basic and acidic residues: residues 1122–1148 and 1694–1704; these read SERA…KTEL and RAKRQAQQERD. Basic and acidic residues predominate over residues 1947-1959; the sequence is DGKAEAGDAKATE.

It belongs to the TRAFAC class myosin-kinesin ATPase superfamily. Myosin family. Myosin is a hexameric protein that consists of 2 heavy chain subunits (MHC), 2 alkali light chain subunits (MLC) and 2 regulatory light chain subunits (MLC-2). In terms of tissue distribution, expressed in fibroblasts, brain, lung, kidney, spleen, and skeletal, cardiac and smooth muscles.

It localises to the cytoplasm. The protein resides in the cytoskeleton. It is found in the cell cortex. The protein localises to the cytoplasmic vesicle. Its subcellular location is the secretory vesicle. It localises to the cortical granule. Cellular myosin that appears to play a role in cytokinesis, cell shape, and specialized functions such as secretion and capping. The chain is Myosin-9 (MYH9) from Gallus gallus (Chicken).